Consider the following 416-residue polypeptide: Ribulose bisphosphate carboxylase large chain (416 aa).

Substrate is bound by residues Asn-100 and Thr-150. Lys-152 functions as the Proton acceptor in the catalytic mechanism. Residue Lys-154 coordinates substrate. Mg(2+) is bound by residues Lys-178, Asp-180, and Glu-181. The residue at position 178 (Lys-178) is an N6-carboxylysine. The active-site Proton acceptor is His-271. Arg-272, His-304, and Ser-356 together coordinate substrate.

This sequence belongs to the RuBisCO large chain family. Type I subfamily. Heterohexadecamer of 8 large chains and 8 small chains; disulfide-linked. The disulfide link is formed within the large subunit homodimers. Mg(2+) serves as cofactor. The disulfide bond which can form in the large chain dimeric partners within the hexadecamer appears to be associated with oxidative stress and protein turnover.

The protein localises to the plastid. The protein resides in the chloroplast. It carries out the reaction 2 (2R)-3-phosphoglycerate + 2 H(+) = D-ribulose 1,5-bisphosphate + CO2 + H2O. It catalyses the reaction D-ribulose 1,5-bisphosphate + O2 = 2-phosphoglycolate + (2R)-3-phosphoglycerate + 2 H(+). Functionally, ruBisCO catalyzes two reactions: the carboxylation of D-ribulose 1,5-bisphosphate, the primary event in carbon dioxide fixation, as well as the oxidative fragmentation of the pentose substrate in the photorespiration process. Both reactions occur simultaneously and in competition at the same active site. The chain is Ribulose bisphosphate carboxylase large chain (rbcL) from Cheiropleuria bicuspis (Fern).